An 847-amino-acid polypeptide reads, in one-letter code: MRSFLLLTALLGVAAVAEDGLAAWLRYAPIPHAKSYHKNLPSVIVPLNATAGRPIDTAAYELVDGIKGIFGKRVTLKNETRDDPNLPAVTVGTVEAYAEAGGDVSSVPELIDDGYYLSVAGPSVLILGQNERGALYGTFQYLERLAQGKVSDTSFASNPSAPIRWVNQWDNLQDGGTHGSVERGYGGDSIFFWDGRVRDDLTRASQYARLLASIGLNAVIVNNVNANETILTQENMDGVARIADAFRPYGIQLGLSLNFASPQSLGGLDTFDPFDERVISWWGEITDELYERIPDMAGYLVKANSEGQPGPFTYNRTLADGANLFARALQPHGGIVLFRAFVYDHENLNETLDWKADRANAAVEFFDGLDPQFEDNVVIQIKNGPIDFQVREPVSPLFAHLSQTASAVELQVTQEYLGQQCHLVYLAPMWKEVLDFDLRVDGKDSVVSDIVSGRRFNNTLGGYAGVVNVGLNTTWLGSHLAMSNLYAYGRLAWDPSADSVELLQEWIKMTFSHDQEVVDVITKMSMESWPAYENYSGNLGIQTLTDILLGHYGPNPASQDGNPWGQWTRADADSIGMDRTVWNGTGNAGQYPEEVYQMYENIDTTPDNLLLWFHHVPYTQRLKSGKTVIQHFYDAHYRGSATAQTFVSLWKTIKGKIDKERYEHVLFRLVYQAGHALVWRDSITNFYYNKSGIPDEAGRVGNHPYRIEAEDMELDGYEPYLVSPFEAASGSHCIVTSNNSTEGRASTPLKVKNGKYDIAVNYFDQAIGNSTWRLFLDDDLVGEWKGDLEYILGRAPSPYIDGQTAARITFKHVHIKSRSTLSIVGIPDGMEPAPIDYVSILPEGVID.

The first 22 residues, M1–A22, serve as a signal peptide directing secretion. 13 N-linked (GlcNAc...) asparagine glycosylation sites follow: N48, N78, N227, N315, N349, N457, N472, N534, N583, N689, N738, N739, and N769.

It belongs to the glycosyl hydrolase 67 family.

The protein localises to the secreted. It carries out the reaction an alpha-D-glucuronoside + H2O = D-glucuronate + an alcohol. Alpha-glucuronidase involved in the hydrolysis of xylan, a major structural heterogeneous polysaccharide found in plant biomass representing the second most abundant polysaccharide in the biosphere, after cellulose. Releases 4-O-methylglucuronic acid from xylan. The protein is Alpha-glucuronidase A (aguA) of Emericella nidulans (strain FGSC A4 / ATCC 38163 / CBS 112.46 / NRRL 194 / M139) (Aspergillus nidulans).